A 479-amino-acid chain; its full sequence is tRNA-dihydrouridine(20) synthase [NAD(P)+] (479 aa).

FMN contacts are provided by residues 14 to 16 (PMV) and Gln-87. The Proton donor role is filled by Cys-116. FMN-binding positions include Lys-159, His-187, 221–223 (NGD), and 245–246 (AR).

The protein belongs to the Dus family. Dus2 subfamily. Requires FMN as cofactor.

The protein localises to the cytoplasm. The protein resides in the nucleus. The enzyme catalyses 5,6-dihydrouridine(20) in tRNA + NADP(+) = uridine(20) in tRNA + NADPH + H(+). The catalysed reaction is 5,6-dihydrouridine(20) in tRNA + NAD(+) = uridine(20) in tRNA + NADH + H(+). It catalyses the reaction a 5,6-dihydrouridine in mRNA + NAD(+) = a uridine in mRNA + NADH + H(+). It carries out the reaction a 5,6-dihydrouridine in mRNA + NADP(+) = a uridine in mRNA + NADPH + H(+). Catalyzes the NADPH-dependent synthesis of dihydrouridine, a modified base found in the D-loop of most tRNAs. Specifically modifies U20 in cytoplasmic tRNAs. Also able to mediate dihydrouridylation of some mRNAs, thereby affecting their translation. This Schizosaccharomyces pombe (strain 972 / ATCC 24843) (Fission yeast) protein is tRNA-dihydrouridine(20) synthase [NAD(P)+].